We begin with the raw amino-acid sequence, 575 residues long: Isocitrate dehydrogenase kinase/phosphatase (575 aa).

ATP contacts are provided by residues 316-322 (ARGDKGL) and lysine 337. Residue aspartate 372 is part of the active site.

This sequence belongs to the AceK family.

It localises to the cytoplasm. The catalysed reaction is L-seryl-[isocitrate dehydrogenase] + ATP = O-phospho-L-seryl-[isocitrate dehydrogenase] + ADP + H(+). Functionally, bifunctional enzyme which can phosphorylate or dephosphorylate isocitrate dehydrogenase (IDH) on a specific serine residue. This is a regulatory mechanism which enables bacteria to bypass the Krebs cycle via the glyoxylate shunt in response to the source of carbon. When bacteria are grown on glucose, IDH is fully active and unphosphorylated, but when grown on acetate or ethanol, the activity of IDH declines drastically concomitant with its phosphorylation. The sequence is that of Isocitrate dehydrogenase kinase/phosphatase from Anaeromyxobacter sp. (strain Fw109-5).